We begin with the raw amino-acid sequence, 318 residues long: Cobalamin biosynthesis protein CobD (318 aa).

A run of 5 helical transmembrane segments spans residues 51-71 (VGGV…AWGA), 77-97 (LVHP…CLAA), 153-173 (DGVI…ALAY), 206-226 (LIPA…AGLS), and 296-316 (MYGA…ILTI).

Belongs to the CobD/CbiB family.

It localises to the cell membrane. It participates in cofactor biosynthesis; adenosylcobalamin biosynthesis. In terms of biological role, converts cobyric acid to cobinamide by the addition of aminopropanol on the F carboxylic group. This Geobacter metallireducens (strain ATCC 53774 / DSM 7210 / GS-15) protein is Cobalamin biosynthesis protein CobD.